Reading from the N-terminus, the 518-residue chain is Membrane-bound lytic murein transglycosylase F (518 aa).

The signal sequence occupies residues 1–21 (MKKLKINYLFIGILALLLAVA). Positions 22 to 269 (LWPSIPWFGK…RIEEKYLGHG (248 aa)) are non-LT domain. Positions 270–518 (DDFDYVDTRT…SRKGSEEKQN (249 aa)) are LT domain. E314 is an active-site residue.

The protein in the N-terminal section; belongs to the bacterial solute-binding protein 3 family. This sequence in the C-terminal section; belongs to the transglycosylase Slt family.

The protein resides in the cell outer membrane. The enzyme catalyses Exolytic cleavage of the (1-&gt;4)-beta-glycosidic linkage between N-acetylmuramic acid (MurNAc) and N-acetylglucosamine (GlcNAc) residues in peptidoglycan, from either the reducing or the non-reducing ends of the peptidoglycan chains, with concomitant formation of a 1,6-anhydrobond in the MurNAc residue.. Its function is as follows. Murein-degrading enzyme that degrades murein glycan strands and insoluble, high-molecular weight murein sacculi, with the concomitant formation of a 1,6-anhydromuramoyl product. Lytic transglycosylases (LTs) play an integral role in the metabolism of the peptidoglycan (PG) sacculus. Their lytic action creates space within the PG sacculus to allow for its expansion as well as for the insertion of various structures such as secretion systems and flagella. This chain is Membrane-bound lytic murein transglycosylase F, found in Shigella dysenteriae serotype 1 (strain Sd197).